The following is a 290-amino-acid chain: Probable 2-(5''-triphosphoribosyl)-3'-dephosphocoenzyme-A synthase (290 aa).

Belongs to the CitG/MdcB family.

The enzyme catalyses 3'-dephospho-CoA + ATP = 2'-(5''-triphospho-alpha-D-ribosyl)-3'-dephospho-CoA + adenine. Functionally, involved in the formation of 2-(5''-phosphoribosyl)-3'-dephosphocoenzyme-A, the prosthetic group of the acyl-carrier protein of the malonate decarboxylase. This is Probable 2-(5''-triphosphoribosyl)-3'-dephosphocoenzyme-A synthase from Pseudomonas fluorescens (strain Pf0-1).